Consider the following 1744-residue polypeptide: Myotubularin-related protein 5 (1744 aa).

Residues 14 to 150 form the uDENN domain; the sequence is DTVAVIVLEE…IRFLTYELVE (137 aa). Positions 165 to 304 constitute a cDENN domain; the sequence is ELGFELIPIS…YYNSLHQRLR (140 aa). The 107-residue stretch at 306 to 412 folds into the dDENN domain; it reads VMFTTTSQED…LTRALPRRKH (107 aa). The region spanning 787–871 is the GRAM domain; the sequence is KGNFDPVLAH…LYSMESFKKL (85 aa). The 452-residue stretch at 996 to 1447 folds into the Myotubularin phosphatase domain; that stretch reads NAHIRYAVID…PQIHMWPFLA (452 aa). Polar residues predominate over residues 1102-1116; it reads TGSMTGSQQTLHSKA. A disordered region spans residues 1102 to 1123; that stretch reads TGSMTGSQQTLHSKASSNEESS. Residues 1540–1590 form a Phorbol-ester/DAG-type zinc finger; it reads IHELTPFTVGARPVQCCYCTNILTRWSKAVHCKKCRIHVHEGCVNRNITIG. The 101-residue stretch at 1643–1743 folds into the PH domain; it reads PPLCTGYLSK…WKECIEQVIR (101 aa).

The protein belongs to the protein-tyrosine phosphatase family. Non-receptor class myotubularin subfamily.

Probably acts as an adapter for other myotubularin-like phosphatases. This is Myotubularin-related protein 5 from Caenorhabditis elegans.